A 217-amino-acid polypeptide reads, in one-letter code: Ribulose-phosphate 3-epimerase (217 aa).

Serine 6 serves as a coordination point for substrate. Residues histidine 29, aspartate 31, and histidine 62 each contribute to the a divalent metal cation site. Catalysis depends on aspartate 31, which acts as the Proton acceptor. Substrate-binding positions include histidine 62, 138–141 (GFGG), 171–173 (DGG), and 193–194 (GS). Position 171 (aspartate 171) interacts with a divalent metal cation. Residue aspartate 171 is the Proton donor of the active site.

It belongs to the ribulose-phosphate 3-epimerase family. The cofactor is a divalent metal cation.

The catalysed reaction is D-ribulose 5-phosphate = D-xylulose 5-phosphate. The protein operates within carbohydrate degradation. In terms of biological role, catalyzes the reversible epimerization of D-ribulose 5-phosphate to D-xylulose 5-phosphate. This Helicobacter pylori (strain ATCC 700392 / 26695) (Campylobacter pylori) protein is Ribulose-phosphate 3-epimerase.